The sequence spans 509 residues: MAFTSPLSTWSLGQQFGLALVISALALVSVIIYGCFLHPLRHIPGPFLAKFSPLWIMRALHRMRFNSELQALHQQYGNVVRIGPNEVSFASLEAETAIYAKQEDGRFSKAGTFLTLFSDLVLNAPTLITIPDPILHRKLHKVIQQAFTPQALARQEPIQKLHIDMAMSELEELAKSGGTVDIADTLETMFWEIIGDLAFGEPLMSGKRPTYESLKQLGKSTMPMVEALSFFLTLPGIASVFGIARSLITALPFPSQLSKLVPSSKLRDCAERQDGREDFLTAIMGSEKQDLVLDADAFFSNAMGLTLAGYQTTATTLAATFYHILRYPEAYNRVCFEIRSTFVSDEEITGARLGRLPFLNACIRETLRLLPPANGKTAQRTASSCTIDGVHIPAGTTVSADLYTIQRSPKYFADPAAFRPERWLDVAEDSEFKRDNRAAYRPFLIGSRACIGREMAQQSIRLIFGNLLWKYDFQQLDQDGFVWERDAGSSLIYTDYKVMVHVMKASGRS.

Helical transmembrane passes span 16–36 (FGLALVISALALVSVIIYGCF) and 224–244 (MVEALSFFLTLPGIASVFGIA). Cys-450 provides a ligand contact to heme.

It belongs to the cytochrome P450 family. The cofactor is heme.

It localises to the membrane. It participates in secondary metabolite biosynthesis. Functionally, cytochrome P450 monooxygenase; part of the gene cluster that mediates the biosynthesis of the mycotoxin fusaproliferin (FUP) that belongs to the class of bicyclic sesterterpenoids. FUP2 introduces a hydroxyl group at the C-24 position resulting in the formation of preterpestacin IIa, which can be further oxidized. The oxidation of the hydroxyl group at C-24 to an aldehyde and further to a carboxylic group takes place via unspecific alcohol and aldehyde dehydrogenases and leads to the shunt products preterpestacin IIc and preterpestacin IIb, respectively. The FUP biosynthetic pathway starts with the enzyme encoded by FUP1 that combines a C-terminal prenyltransferase domain responsible for the synthesis of geranylgeranyl diphosphate with the N-terminal terpene cyclase domain, to yield preterpestacin I. Preterpestacin I is then decorated by oxygenation steps that are catalyzed by two cytochrome P450 monooxygenases. First, FUP2 introduces a hydroxyl group at the C-24 position resulting in the formation of preterpestacin IIa. The second P450 monooxygenase catalyzes the hydroxylation at C-16 and C-17 of preterpestacin IIa, producing preterpestacin III. Subsequently, the FAD-dependent oxidoreductase FUP4 catalyzes the oxidation of the hydroxy group at the C-16 position to a keto group, leading to the formation of (-)-terpestacin, which is the immediate precursor of FUP. The final step in the proposed biosynthetic pathway is the addition of an acetyl group at the C-24 position of terpestacin, which is catalyzed by the acetyltransferase FUP5. This Fusarium proliferatum (strain ET1) (Orchid endophyte fungus) protein is Cytochrome P450 monooxygenase FUP2.